A 271-amino-acid chain; its full sequence is MSHLLRKPQADEISQGVNIIHDVTSANSDLKYVGFKVVDLTPGSAYTEDLKKTECCIVAVTGKITVTDYDQTFESIGTRESVFERKPTDSVYVSNDRSFEITAVSGARVALCYSPSEHQLPTKLIKAEDNGVEHRGKLANKRTVHNILPDSDPSANSLLVVEVYTDSGNWSSYPPHKHDQDNLPAESFLEETYYHETDPPQGFVFQRVYTDDRSIDETMTAENENVVIVPAGYHPVGVPDGYTSYYLNVMAGPTRKWKFHNDPAHEWILER.

It belongs to the isomerase IolB family.

It catalyses the reaction 5-deoxy-D-glucuronate = 5-dehydro-2-deoxy-D-gluconate. It functions in the pathway polyol metabolism; myo-inositol degradation into acetyl-CoA; acetyl-CoA from myo-inositol: step 4/7. Involved in the isomerization of 5-deoxy-glucuronate (5DG) to 5-dehydro-2-deoxy-D-gluconate (DKG or 2-deoxy-5-keto-D-gluconate). This Bacillus velezensis (strain DSM 23117 / BGSC 10A6 / LMG 26770 / FZB42) (Bacillus amyloliquefaciens subsp. plantarum) protein is 5-deoxy-glucuronate isomerase.